The chain runs to 232 residues: tRNA pseudouridine synthase B (232 aa).

D53 serves as the catalytic Nucleophile.

It belongs to the pseudouridine synthase TruB family. Type 1 subfamily.

The enzyme catalyses uridine(55) in tRNA = pseudouridine(55) in tRNA. In terms of biological role, responsible for synthesis of pseudouridine from uracil-55 in the psi GC loop of transfer RNAs. This chain is tRNA pseudouridine synthase B, found in Malacoplasma penetrans (strain HF-2) (Mycoplasma penetrans).